A 502-amino-acid chain; its full sequence is 1-aminocyclopropane-1-carboxylate synthase-like protein 1 (502 aa).

A disordered region spans residues 1–24 (MFCLPQQESTAPTTCTGSASTQDM). Glu-106 provides a ligand contact to substrate. Lys-324 is subject to N6-(pyridoxal phosphate)lysine.

The protein belongs to the class-I pyridoxal-phosphate-dependent aminotransferase family.

In terms of biological role, does not catalyze the synthesis of 1-aminocyclopropane-1-carboxylate but is capable of catalyzing the deamination of L-vinylglycine. This chain is 1-aminocyclopropane-1-carboxylate synthase-like protein 1 (Accs), found in Mus musculus (Mouse).